The following is a 282-amino-acid chain: 4-diphosphocytidyl-2-C-methyl-D-erythritol kinase (282 aa).

Lys9 is a catalytic residue. 98–108 (PMGGGLGGGSS) contacts ATP. Residue Asp140 is part of the active site.

Belongs to the GHMP kinase family. IspE subfamily. As to quaternary structure, homodimer.

It catalyses the reaction 4-CDP-2-C-methyl-D-erythritol + ATP = 4-CDP-2-C-methyl-D-erythritol 2-phosphate + ADP + H(+). It participates in isoprenoid biosynthesis; isopentenyl diphosphate biosynthesis via DXP pathway; isopentenyl diphosphate from 1-deoxy-D-xylulose 5-phosphate: step 3/6. Catalyzes the phosphorylation of the position 2 hydroxy group of 4-diphosphocytidyl-2C-methyl-D-erythritol. In Salmonella schwarzengrund (strain CVM19633), this protein is 4-diphosphocytidyl-2-C-methyl-D-erythritol kinase.